The sequence spans 453 residues: DNA repair protein RadA (453 aa).

Residues 11–28 (CNQCGATAPKWLGQCPGC) form a C4-type zinc finger. Position 93 to 100 (93 to 100 (GDPGIGKS)) interacts with ATP. The RadA KNRFG motif signature appears at 250–254 (KNRFG). The tract at residues 349 to 453 (DVFLSITGGL…TIKDAIRLLL (105 aa)) is lon-protease-like.

The protein belongs to the RecA family. RadA subfamily.

Its function is as follows. DNA-dependent ATPase involved in processing of recombination intermediates, plays a role in repairing DNA breaks. Stimulates the branch migration of RecA-mediated strand transfer reactions, allowing the 3' invading strand to extend heteroduplex DNA faster. Binds ssDNA in the presence of ADP but not other nucleotides, has ATPase activity that is stimulated by ssDNA and various branched DNA structures, but inhibited by SSB. Does not have RecA's homology-searching function. This chain is DNA repair protein RadA, found in Chlamydia pneumoniae (Chlamydophila pneumoniae).